The sequence spans 239 residues: Lactose-binding lectin-2 (239 aa).

Mn(2+) is bound by residues Glu-122 and Asp-124. Positions 124, 126, 128, and 131 each coordinate Ca(2+). Mn(2+) is bound by residues Asp-131 and His-137.

Belongs to the leguminous lectin family. In terms of assembly, homotetramer. Seed.

The protein localises to the vacuole. The protein resides in the aleurone grain. Lactose-binding lectin. Also binds derivatives of galactose, glucose, lactose, and mannose. Binds O-glycoproteins such as mucins more strongly than N-glycoproteins. Shows agglutinating activity towards rabbit erythrocytes. The polypeptide is Lactose-binding lectin-2 (Cymbosema roseum (Dioclea purpurea)).